The sequence spans 62 residues: Pro-MCH variant (62 aa).

Positions 23-41 (GSVAFPAENGVQDTESTQE) are NGE-like. The tract at residues 29-62 (AENGVQDTESTQEKRETGDEENSAKFPIGRRDFD) is disordered. Residues 44–56 (ETGDEENSAKFPI) are NEI-like. The melanin-concentrating hormone-like stretch occupies residues 60–62 (DFD).

This sequence belongs to the melanin-concentrating hormone family.

The chain is Pro-MCH variant (PMCHL1) from Pan paniscus (Pygmy chimpanzee).